A 185-amino-acid polypeptide reads, in one-letter code: Ribosome-recycling factor (185 aa).

Belongs to the RRF family.

It localises to the cytoplasm. Its function is as follows. Responsible for the release of ribosomes from messenger RNA at the termination of protein biosynthesis. May increase the efficiency of translation by recycling ribosomes from one round of translation to another. The chain is Ribosome-recycling factor from Pseudomonas fluorescens (strain Pf0-1).